A 210-amino-acid chain; its full sequence is LexA repressor (210 aa).

Residues 30–50 (RVEIAREIGFKSPNAAEEHLK) constitute a DNA-binding region (H-T-H motif). Active-site for autocatalytic cleavage activity residues include serine 127 and lysine 164.

This sequence belongs to the peptidase S24 family. As to quaternary structure, homodimer.

The catalysed reaction is Hydrolysis of Ala-|-Gly bond in repressor LexA.. In terms of biological role, represses a number of genes involved in the response to DNA damage (SOS response), including recA and lexA. In the presence of single-stranded DNA, RecA interacts with LexA causing an autocatalytic cleavage which disrupts the DNA-binding part of LexA, leading to derepression of the SOS regulon and eventually DNA repair. This chain is LexA repressor, found in Actinobacillus pleuropneumoniae serotype 7 (strain AP76).